The chain runs to 356 residues: Putative mitogen-activated protein kinase 14C (356 aa).

Residues 20–305 (YEFVRFLGGG…AAEAMLHPYL (286 aa)) form the Protein kinase domain. ATP contacts are provided by residues 26–34 (LGGGSFGQV) and Lys-49. Asp-147 functions as the Proton acceptor in the catalytic mechanism. Residue Thr-177 is modified to Phosphothreonine.

This sequence belongs to the protein kinase superfamily. CMGC Ser/Thr protein kinase family. MAP kinase subfamily. The cofactor is Mg(2+). The phosphorylation on Thr-177 activates the enzyme. A conserved Tyr, which must also be phosphorylated to activate the enzyme in closely related sequences, is replaced by His-179 in this sequence.

The catalysed reaction is L-seryl-[protein] + ATP = O-phospho-L-seryl-[protein] + ADP + H(+). It catalyses the reaction L-threonyl-[protein] + ATP = O-phospho-L-threonyl-[protein] + ADP + H(+). Its function is as follows. Kinase involved in a signal transduction pathway. The sequence is that of Putative mitogen-activated protein kinase 14C (p38c) from Drosophila melanogaster (Fruit fly).